Reading from the N-terminus, the 338-residue chain is MLDRLVLALLAVLSVPYALAVRLRALAYGAGIFRVKQLNRPVISVGNLTVGGTGKTPMVALVARLLMARGKRVAVISRGYGGSLEGKTHIVSDGQRVFLSAAEAGDEPVHLATAVPGLMAVIGTDRYAAGLLAQERLNPDVFILDDGFQHLRLHRDLNILLMDCSAPLGNGMVLPAGLLREPPLALKRADLVVYTRCTGAEAPAVHGAIPSCRAGHVLAGVELLPGGERQPFTALYGRRGVAFAGIADPDAFFASLREEGVDLAATVSFGDHCPYGEEEVARLMAARRTAGADFLITTGKDAVKLGPVLSRLGIVYAAVLEMSLMDPKPLETAIDKVL.

49–56 is a binding site for ATP; it reads TVGGTGKT.

It belongs to the LpxK family.

The catalysed reaction is a lipid A disaccharide + ATP = a lipid IVA + ADP + H(+). The protein operates within glycolipid biosynthesis; lipid IV(A) biosynthesis; lipid IV(A) from (3R)-3-hydroxytetradecanoyl-[acyl-carrier-protein] and UDP-N-acetyl-alpha-D-glucosamine: step 6/6. Functionally, transfers the gamma-phosphate of ATP to the 4'-position of a tetraacyldisaccharide 1-phosphate intermediate (termed DS-1-P) to form tetraacyldisaccharide 1,4'-bis-phosphate (lipid IVA). This is Tetraacyldisaccharide 4'-kinase from Geobacter metallireducens (strain ATCC 53774 / DSM 7210 / GS-15).